We begin with the raw amino-acid sequence, 363 residues long: UDP-N-acetylglucosamine--N-acetylmuramyl-(pentapeptide) pyrophosphoryl-undecaprenol N-acetylglucosamine transferase (363 aa).

UDP-N-acetyl-alpha-D-glucosamine is bound by residues 14–16 (TGG), arginine 171, serine 200, and glutamine 290.

It belongs to the glycosyltransferase 28 family. MurG subfamily.

Its subcellular location is the cell inner membrane. It carries out the reaction di-trans,octa-cis-undecaprenyl diphospho-N-acetyl-alpha-D-muramoyl-L-alanyl-D-glutamyl-meso-2,6-diaminopimeloyl-D-alanyl-D-alanine + UDP-N-acetyl-alpha-D-glucosamine = di-trans,octa-cis-undecaprenyl diphospho-[N-acetyl-alpha-D-glucosaminyl-(1-&gt;4)]-N-acetyl-alpha-D-muramoyl-L-alanyl-D-glutamyl-meso-2,6-diaminopimeloyl-D-alanyl-D-alanine + UDP + H(+). It participates in cell wall biogenesis; peptidoglycan biosynthesis. Cell wall formation. Catalyzes the transfer of a GlcNAc subunit on undecaprenyl-pyrophosphoryl-MurNAc-pentapeptide (lipid intermediate I) to form undecaprenyl-pyrophosphoryl-MurNAc-(pentapeptide)GlcNAc (lipid intermediate II). The protein is UDP-N-acetylglucosamine--N-acetylmuramyl-(pentapeptide) pyrophosphoryl-undecaprenol N-acetylglucosamine transferase of Borreliella burgdorferi (strain ATCC 35210 / DSM 4680 / CIP 102532 / B31) (Borrelia burgdorferi).